The primary structure comprises 153 residues: UPF0225 protein ETA_15740 (153 aa).

It belongs to the UPF0225 family.

The protein is UPF0225 protein ETA_15740 of Erwinia tasmaniensis (strain DSM 17950 / CFBP 7177 / CIP 109463 / NCPPB 4357 / Et1/99).